The chain runs to 1479 residues: Chromosome partition protein MukB (1479 aa).

Residue 34-41 (GGNGAGKS) coordinates ATP. Coiled coils occupy residues 138-163 (ETLN…MEGV) and 331-664 (QAAS…RLSQ). A flexible hinge region spans residues 665–782 (PGGSEDPRLN…ALPLFGRAAR (118 aa)). Coiled-coil stretches lie at residues 831–1112 (DDPE…TAKA) and 1206–1257 (VEAI…MLNQ).

Belongs to the SMC family. MukB subfamily. As to quaternary structure, homodimerization via its hinge domain. Binds to DNA via its C-terminal region. Interacts, and probably forms a ternary complex, with MukE and MukF via its C-terminal region. The complex formation is stimulated by calcium or magnesium. Interacts with tubulin-related protein FtsZ.

It is found in the cytoplasm. It localises to the nucleoid. In terms of biological role, plays a central role in chromosome condensation, segregation and cell cycle progression. Functions as a homodimer, which is essential for chromosome partition. Involved in negative DNA supercoiling in vivo, and by this means organize and compact chromosomes. May achieve or facilitate chromosome segregation by condensation DNA from both sides of a centrally located replisome during cell division. This Klebsiella pneumoniae protein is Chromosome partition protein MukB.